Here is a 509-residue protein sequence, read N- to C-terminus: tRNA-2-methylthio-N(6)-dimethylallyladenosine synthase (509 aa).

Over residues 1-15 the composition is skewed to polar residues; it reads MNEQQRLASQQANSS. The tract at residues 1 to 25 is disordered; the sequence is MNEQQRLASQQANSSTKKEEKDYSK. Over residues 16-25 the composition is skewed to basic and acidic residues; sequence TKKEEKDYSK. Positions 66–184 constitute an MTTase N-terminal domain; that stretch reads RKFYIRTYGC…LPYILKDAMF (119 aa). Positions 75, 111, 145, 221, 225, and 228 each coordinate [4Fe-4S] cluster. In terms of domain architecture, Radical SAM core spans 207-437; it reads RRGDIKAWVN…NTLVNTLAIE (231 aa). Positions 440–503 constitute a TRAM domain; it reads SRYKGQIVEV…TWSLNGELVE (64 aa).

This sequence belongs to the methylthiotransferase family. MiaB subfamily. As to quaternary structure, monomer. [4Fe-4S] cluster is required as a cofactor.

The protein resides in the cytoplasm. It carries out the reaction N(6)-dimethylallyladenosine(37) in tRNA + (sulfur carrier)-SH + AH2 + 2 S-adenosyl-L-methionine = 2-methylsulfanyl-N(6)-dimethylallyladenosine(37) in tRNA + (sulfur carrier)-H + 5'-deoxyadenosine + L-methionine + A + S-adenosyl-L-homocysteine + 2 H(+). In terms of biological role, catalyzes the methylthiolation of N6-(dimethylallyl)adenosine (i(6)A), leading to the formation of 2-methylthio-N6-(dimethylallyl)adenosine (ms(2)i(6)A) at position 37 in tRNAs that read codons beginning with uridine. The chain is tRNA-2-methylthio-N(6)-dimethylallyladenosine synthase from Bacillus cereus (strain B4264).